The primary structure comprises 798 residues: Shutoff protein (798 aa).

A compositionally biased stretch (basic and acidic residues) spans 1-14 (MESTADGDKARGEE). The interval 1–123 (MESTADGDKA…SHSSDSELGC (123 aa)) is disordered. Residues 33 to 49 (APEDEHPDDGEPDEPAD) are compositionally biased toward acidic residues. A compositionally biased stretch (basic and acidic residues) spans 68 to 80 (GGRDAECDGEAAR). Positions 86 to 105 (DESSAPTTPSTAVRRSSGES) are enriched in polar residues. Residues 309-376 (LMEVLLQPFA…GRPLYRSARA (68 aa)) form a binding to host EIF4G region. The RRM domain occupies 379-497 (SVFREPSSIK…AIYALETPTE (119 aa)). Y711 bears the Phosphotyrosine; by host mark. Residues 740–798 (YADHARGAATSAEPSRALRPTSVATAAGNRTRGCSSARYRLGPTLRRRSNSSWPREWST) form a disordered region. The segment covering 789-798 (NSSWPREWST) has biased composition (polar residues).

This sequence belongs to the adenoviridae shutoff protein family. As to quaternary structure, monomer. Interacts with hexon protein; this interaction allows chaperoning and trimerization of hexon proteins. Interacts (via N-terminus) with host initiation factor EIF4G (via C-terminus). Interacts (via RRM domain) with viral mRNAs that contain the tripartite leader; this interaction allows ribosome shunting and expression of viral late mRNAs. In terms of processing, might be cleaved by the viral protease. Post-translationally, phosphorylated. Tyrosine phosphorylation enhances preferential binding to tripartite leader mRNAs and allows ribosome shunting. Methylated. Asymmetric dimethylation by host PRMT1 of the Arg/Gly-rich region may regulate shutoff protein binding to hexon and promote the capsid assembly in the nucleus.

The protein resides in the host cytoplasm. Functionally, protein that inhibits host translation while promoting late viral translation by ribosome shunting. Blocks host cap-dependent translation by binding to eIF4G, displacing MKNK1 from cap initiation complexes and preventing EIF4E phosphorylation. Binds to the tripartite leader sequence of viral late mRNAs and recruits host eIF4G, PABPC1/poly-A binding protein and 40S ribosomes subunits on viral mRNAs, allowing ribosome shunting and efficient translation of late viral mRNAs even though conventional translation via ribosome scanning from the cap has been shut off in the host cell. During assembly, acts as a chaperone protein that helps hexon proteins assembly into trimers. This is Shutoff protein from Galliformes (FAdV-10).